Here is a 145-residue protein sequence, read N- to C-terminus: Angiogenin-3 (145 aa).

The N-terminal stretch at M1–A24 is a signal peptide. A Pyrrolidone carboxylic acid modification is found at Q25. H37 functions as the Proton acceptor in the catalytic mechanism. 3 cysteine pairs are disulfide-bonded: C50/C104, C63/C115, and C81/C130. Residues K55–L59 carry the Nucleolar localization signal motif. Positions 65 and 106 each coordinate Zn(2+). The Proton donor role is filled by H137.

This sequence belongs to the pancreatic ribonuclease family.

It localises to the cytoplasmic vesicle. The protein localises to the secretory vesicle lumen. It is found in the secreted. Its subcellular location is the nucleus. The protein resides in the nucleolus. Divalent metal ions, such as Cu2+ and Zn2+, may inhibit the ribonucleolytic activity. Functionally, has low ribonuclease activity (in vitro). The sequence is that of Angiogenin-3 (Ang3) from Mus musculus (Mouse).